The sequence spans 154 residues: GTP-dependent dephospho-CoA kinase (154 aa).

GTP is bound by residues Asp34, Asp53, and Glu107.

This sequence belongs to the GTP-dependent DPCK family.

It catalyses the reaction 3'-dephospho-CoA + GTP = GDP + CoA + H(+). Its pathway is cofactor biosynthesis; coenzyme A biosynthesis. In terms of biological role, catalyzes the GTP-dependent phosphorylation of the 3'-hydroxyl group of dephosphocoenzyme A to form coenzyme A (CoA). This is GTP-dependent dephospho-CoA kinase from Nitrosopumilus maritimus (strain SCM1).